The sequence spans 167 residues: MFPMVTGFMNYGQQTVRAARYIGQGFMITLSHANRLPVTIQYPYEKLITSERFRGRIHFEFDKCIACEVCVRVCPIDLPVVDWKLETGIRKKRLLNYSIDFGICIFCGNCVEYCPTNCLSMTEEYELSTYDRHELNYNQIALGRLPMSVINDYTIRTISNSPQIIIK.

2 consecutive 4Fe-4S ferredoxin-type domains span residues 55-84 (GRIHFEFDKCIACEVCVRVCPIDLPVVDWK) and 95-124 (LNYSIDFGICIFCGNCVEYCPTNCLSMTEE). The [4Fe-4S] cluster site is built by Cys64, Cys67, Cys70, Cys74, Cys104, Cys107, Cys110, and Cys114.

Belongs to the complex I 23 kDa subunit family. As to quaternary structure, NDH is composed of at least 16 different subunits, 5 of which are encoded in the nucleus. Requires [4Fe-4S] cluster as cofactor.

It localises to the plastid. Its subcellular location is the chloroplast thylakoid membrane. It carries out the reaction a plastoquinone + NADH + (n+1) H(+)(in) = a plastoquinol + NAD(+) + n H(+)(out). The enzyme catalyses a plastoquinone + NADPH + (n+1) H(+)(in) = a plastoquinol + NADP(+) + n H(+)(out). In terms of biological role, NDH shuttles electrons from NAD(P)H:plastoquinone, via FMN and iron-sulfur (Fe-S) centers, to quinones in the photosynthetic chain and possibly in a chloroplast respiratory chain. The immediate electron acceptor for the enzyme in this species is believed to be plastoquinone. Couples the redox reaction to proton translocation, and thus conserves the redox energy in a proton gradient. In Eucalyptus globulus subsp. globulus (Tasmanian blue gum), this protein is NAD(P)H-quinone oxidoreductase subunit I, chloroplastic.